A 289-amino-acid chain; its full sequence is Oxaloacetate decarboxylase (289 aa).

Substrate is bound at residue serine 50. Position 88 (aspartate 88) interacts with Mg(2+). 2 residues coordinate substrate: arginine 159 and histidine 235.

Belongs to the isocitrate lyase/PEP mutase superfamily. Oxaloacetate decarboxylase family. As to quaternary structure, homotetramer; dimer of dimers. Requires Mg(2+) as cofactor.

It catalyses the reaction oxaloacetate + H(+) = pyruvate + CO2. Catalyzes the decarboxylation of oxaloacetate into pyruvate. Seems to play a role in maintaining cellular concentrations of bicarbonate and pyruvate. The sequence is that of Oxaloacetate decarboxylase from Pseudomonas putida (strain GB-1).